Here is a 232-residue protein sequence, read N- to C-terminus: Thiamine import ATP-binding protein ThiQ (232 aa).

In terms of domain architecture, ABC transporter spans 2–230 (LKLTDITWLY…KASASALLGI (229 aa)). 32 to 39 (GPSGAGKS) contributes to the ATP binding site.

The protein belongs to the ABC transporter superfamily. Thiamine importer (TC 3.A.1.19.1) family. In terms of assembly, the complex is composed of two ATP-binding proteins (ThiQ), two transmembrane proteins (ThiP) and a solute-binding protein (ThiB).

It localises to the cell inner membrane. The enzyme catalyses thiamine(out) + ATP + H2O = thiamine(in) + ADP + phosphate + H(+). In terms of biological role, part of the ABC transporter complex ThiBPQ involved in thiamine import. Responsible for energy coupling to the transport system. This Escherichia coli (strain UTI89 / UPEC) protein is Thiamine import ATP-binding protein ThiQ.